The following is a 215-amino-acid chain: Ras-related protein Rab-42 (215 aa).

Positions 19, 21, 22, 23, and 44 each coordinate GTP. The Mg(2+) site is built by threonine 23, threonine 44, and aspartate 68. GTP contacts are provided by glycine 71, lysine 128, aspartate 130, alanine 157, and lysine 158. The interval 196-215 (HRSPNPRSSSRKQDSGTCQC) is disordered. 2 S-geranylgeranyl cysteine lipidation sites follow: cysteine 213 and cysteine 215.

The protein belongs to the small GTPase superfamily. Rab family. Mg(2+) is required as a cofactor.

It is found in the membrane. It catalyses the reaction GTP + H2O = GDP + phosphate + H(+). Its activity is regulated as follows. Regulated by guanine nucleotide exchange factors (GEFs) which promote the exchange of bound GDP for free GTP. Regulated by GTPase activating proteins (GAPs) which increase the GTP hydrolysis activity. Inhibited by GDP dissociation inhibitors (GDIs). Functionally, the small GTPases Rab are key regulators of intracellular membrane trafficking, from the formation of transport vesicles to their fusion with membranes. Rabs cycle between an inactive GDP-bound form and an active GTP-bound form that is able to recruit to membranes different sets of downstream effectors directly responsible for vesicle formation, movement, tethering and fusion. The physiological function of RAB42 remains undefined. This chain is Ras-related protein Rab-42, found in Mus musculus (Mouse).